The sequence spans 774 residues: Protein translocase subunit SecA 2 (774 aa).

ATP contacts are provided by residues Q94, 112 to 116, and D501; that span reads GEGKT.

It belongs to the SecA family. As to quaternary structure, monomer and homodimer. Part of the essential Sec protein translocation apparatus which comprises SecA, SecYEG and auxiliary proteins SecDF. Other proteins may also be involved.

Its subcellular location is the cell membrane. The protein resides in the cytoplasm. It catalyses the reaction ATP + H2O + cellular proteinSide 1 = ADP + phosphate + cellular proteinSide 2.. Functionally, part of the Sec protein translocase complex. Interacts with the SecYEG preprotein conducting channel. Has a central role in coupling the hydrolysis of ATP to the transfer of proteins into and across the cell membrane, serving as an ATP-driven molecular motor driving the stepwise translocation of polypeptide chains across the membrane. This chain is Protein translocase subunit SecA 2, found in Mycobacterium sp. (strain JLS).